A 222-amino-acid polypeptide reads, in one-letter code: MDPTLSLNGDPNIGVYARVFEDLAVVPVEAPKEFRDKIAEALDVEVIETFVQGSSVIGLLLTGNSRGFVVSGLIQDSELEILQEYGDCLLLGEEMNAAGNVILTNDSFAVVHPDMSSAMREMVADFLKVKIIPMSFAGVGTVGMTCACTNTGVLLPARSTPEEIEKLERSIDDANVAIGTGSVNMGSGLIGTGLLINSKGYLAGNATTGYELGRIEDVFGFL.

This sequence belongs to the eIF-6 family.

In terms of biological role, binds to the 50S ribosomal subunit and prevents its association with the 30S ribosomal subunit to form the 70S initiation complex. This chain is Translation initiation factor 6, found in Methanocorpusculum labreanum (strain ATCC 43576 / DSM 4855 / Z).